Reading from the N-terminus, the 166-residue chain is Large ribosomal subunit protein mL49 (166 aa).

The tract at residues 56 to 78 (RIPDPPKHEHYPTPSGWQPPRDP) is disordered.

This sequence belongs to the mitochondrion-specific ribosomal protein mL49 family. Interacts with OXA1L.

The protein localises to the mitochondrion. This Macaca fascicularis (Crab-eating macaque) protein is Large ribosomal subunit protein mL49 (MRPL49).